We begin with the raw amino-acid sequence, 712 residues long: TIR domain-containing adapter molecule 1 (712 aa).

Residues 1–153 (MACTGPSLPS…CGWDIAGDPG (153 aa)) form a TRIF-NTD region. The short motif at 84–91 (EDPEEPPD) is the TRAF6-binding element. The pLxIS motif motif lies at 207-210 (LEIS). The residue at position 210 (serine 210) is a Phosphoserine; by TBK1. 2 disordered regions span residues 216-316 (PFLS…SLPL) and 336-384 (LSVE…LFPS). A Glycyl lysine isopeptide (Lys-Gly) (interchain with G-Cter in ubiquitin) cross-link involves residue lysine 229. The short motif at 248 to 255 (QEPEEMSW) is the TRAF6-binding element. Residues 265–275 (PELPSSPPPGL) show a composition bias toward pro residues. A TRAF6-binding motif is present at residues 299–309 (NYPVECTEGSA). Residues 347-369 (KPCPPTPTTPETSPPPPPPPPSS) show a composition bias toward pro residues. The TIR domain occupies 393–553 (KFYNFVILHA…QDTRALREQS (161 aa)). A sufficient to induce apoptosis region spans residues 512 to 712 (RLDEHSQIFA…APEDKTQEAE (201 aa)). 2 stretches are compositionally biased toward pro residues: residues 620–633 (PFPT…PPPL) and 640–649 (TPPPPSPQPA). The disordered stretch occupies residues 620 to 677 (PFPTWPGCPQPPPLHAWQAGTPPPPSPQPAAFPQSLPFPQSPAFPTASPAPPQSPGLQ). The segment covering 650–666 (AFPQSLPFPQSPAFPTA) has biased composition (low complexity).

As to quaternary structure, homodimer. Found in a multi-helicase-TICAM1 complex at least composed of DHX36, DDX1, DDX21 and TICAM1; this complex exists in resting cells with or without poly(I:C) RNA ligand stimulation. Interacts (via TIR domain) with DDX21 (via C-terminus). Interacts (via TIR domain) with DHX36 (via C-terminus). Interacts with AZI2 and IRF7. Interacts with TICAM2 in TLR4 recruitment. Interaction with PIAS4 inhibits the TICAM1-induced NF-kappa-B, IRF and IFNB1 activation. Interacts with IKBKB and IKBKE. Interaction with SARM1 blocks TICAM1-dependent transcription factor activation. Interacts with TRAF3. Interacts (when phosphorylated) with IRF3; following activation and phosphorylation on the pLxIS motif by TBK1, recruits IRF3. Interacts with TBK1, TRAF6 and RIPK1 and these interactions are enhanced in the presence of WDFY1. Interacts with TRAFD1. Interacts with UBQLN1 (via UBA domain). Interacts with TLR4. Interacts with WDFY1 in response to poly(I:C). Interacts (via the TIR domain) with TLR3 in response to poly(I:C) and this interaction is enhanced in the presence of WDFY1. Interacts with TRIM56. Component of a multi-helicase-TICAM1 complex that acts as a cytoplasmic sensor of viral double-stranded RNA (dsRNA) and plays a role in the activation of a cascade of antiviral responses including the induction of pro-inflammatory cytokines. Interacts (via the TIR domain) with TLR5. Interacts with TRIM8. Interacts with TAX1BP1 and TRIM32; these interactions target TICAM1 to TAX1BP1-mediated selective autophagic degradation. Interacts with DDX50. In terms of assembly, (Microbial infection) Interacts with hepatitis C virus (HCV) NS3/4A protease; this interaction leads to TICAM1 cleavage, thereby disrupting TLR3 signaling and preventing the establishment of an antiviral state. (Microbial infection) Interacts with Seneca Valley virus protease 3C; this interaction allows the cleavage of TICAM1/TRIF and subsequent suppression of host innate immunity. As to quaternary structure, (Microbial infection) Interacts (via C-terminus) with coxsackievirus B3 (CVB3) protease 3C. Phosphorylated by TBK1. Following activation, phosphorylated by TBK1 at Ser-210 in the pLxIS motif. The phosphorylated pLxIS motif constitutes an IRF3-binding motif, leading to recruitment of the transcription factor IRF3 to induce type-I interferons and other cytokines. Post-translationally, polyubiquitinated at Lys-229 by TRIM38 with 'Lys-48'-linked chains, leading to proteasomal degradation. Polyubiquitinated with 'Lys-6'- and 'Lys-33'-linked chains in a TRIM8-dependent manner; ubiquitination disrupts the interaction with TBK1 and subsequent interferon production. In terms of processing, (Microbial infection) Cleaved and degraded by hepatitis A virus (HAV) protein 3CD allowing the virus to disrupt host TLR3 signaling. (Microbial infection) Cleaved by CVB3 protease 3C allowing the virus to disrupt host TLR3 signaling. Post-translationally, (Microbial infection) Cleaved by Seneca Valley virus protease 3C allowing the virus to disrupt host TLR3 signaling. In terms of processing, (Microbial infection) Cleaved by protease 3C of human enterovirus D68 (EV68) allowing the virus to disrupt host TLR3 signaling. (Microbial infection) Cleaved by HCV protease NS3/4A, thereby disrupting TLR3 signaling and preventing the establishment of an antiviral state. As to expression, ubiquitously expressed but with higher levels in liver.

The protein localises to the cytoplasmic vesicle. It is found in the autophagosome. The protein resides in the cytoplasm. Its subcellular location is the cytosol. It localises to the mitochondrion. Its function is as follows. Involved in innate immunity against invading pathogens. Adapter used by TLR3, TLR4 (through TICAM2) and TLR5 to mediate NF-kappa-B and interferon-regulatory factor (IRF) activation, and to induce apoptosis. Ligand binding to these receptors results in TRIF recruitment through its TIR domain. Distinct protein-interaction motifs allow recruitment of the effector proteins TBK1, TRAF6 and RIPK1, which in turn, lead to the activation of transcription factors IRF3 and IRF7, NF-kappa-B and FADD respectively. Phosphorylation by TBK1 on the pLxIS motif leads to recruitment and subsequent activation of the transcription factor IRF3 to induce expression of type I interferon and exert a potent immunity against invading pathogens. Component of a multi-helicase-TICAM1 complex that acts as a cytoplasmic sensor of viral double-stranded RNA (dsRNA) and plays a role in the activation of a cascade of antiviral responses including the induction of pro-inflammatory cytokines. This Homo sapiens (Human) protein is TIR domain-containing adapter molecule 1 (TICAM1).